Consider the following 142-residue polypeptide: Putative pre-16S rRNA nuclease (142 aa).

This sequence belongs to the YqgF nuclease family.

The protein localises to the cytoplasm. Functionally, could be a nuclease involved in processing of the 5'-end of pre-16S rRNA. This is Putative pre-16S rRNA nuclease from Mycoplasmoides gallisepticum (strain R(low / passage 15 / clone 2)) (Mycoplasma gallisepticum).